Consider the following 281-residue polypeptide: UPF0750 membrane protein YvjA (281 aa).

A run of 5 helical transmembrane segments spans residues 14-34, 56-76, 77-97, 108-128, and 149-169; these read YVYI…FLLP, AAYV…ILLG, GKFG…VFLT, LLAA…VYLG, and SLGK…MIVF.

It belongs to the UPF0750 family.

It is found in the cell membrane. This is UPF0750 membrane protein YvjA (yvjA) from Bacillus subtilis (strain 168).